The sequence spans 203 residues: ATP-dependent Clp protease proteolytic subunit 2 (203 aa).

Catalysis depends on Ser-97, which acts as the Nucleophile. His-122 is an active-site residue.

This sequence belongs to the peptidase S14 family. Fourteen ClpP subunits assemble into 2 heptameric rings which stack back to back to give a disk-like structure with a central cavity, resembling the structure of eukaryotic proteasomes.

It localises to the cytoplasm. The catalysed reaction is Hydrolysis of proteins to small peptides in the presence of ATP and magnesium. alpha-casein is the usual test substrate. In the absence of ATP, only oligopeptides shorter than five residues are hydrolyzed (such as succinyl-Leu-Tyr-|-NHMec, and Leu-Tyr-Leu-|-Tyr-Trp, in which cleavage of the -Tyr-|-Leu- and -Tyr-|-Trp bonds also occurs).. Its function is as follows. Cleaves peptides in various proteins in a process that requires ATP hydrolysis. Has a chymotrypsin-like activity. Plays a major role in the degradation of misfolded proteins. The polypeptide is ATP-dependent Clp protease proteolytic subunit 2 (Myxococcus xanthus (strain DK1622)).